A 1193-amino-acid chain; its full sequence is Probable DNA-directed RNA polymerase II subunit RPB2 homolog (1193 aa).

Residue aspartate 808 participates in Mg(2+) binding. The Zn(2+) site is built by cysteine 1137, cysteine 1140, cysteine 1155, and cysteine 1158. The C4-type zinc finger occupies 1137 to 1158; the sequence is CVPCKSYFKVVKTQNGFFCSGC.

This sequence belongs to the RNA polymerase beta chain family.

It carries out the reaction RNA(n) + a ribonucleoside 5'-triphosphate = RNA(n+1) + diphosphate. Component of the DNA-dependent RNA polymerase that catalyzes the transcription of DNA into RNA using the four ribonucleoside triphosphates as substrates. Second largest component of RNA polymerase II which synthesizes mRNA precursors and many functional non-coding RNAs. Proposed to contribute to the polymerase catalytic activity and forms the polymerase active center together with the largest subunit. The chain is Probable DNA-directed RNA polymerase II subunit RPB2 homolog from Invertebrate iridescent virus 6 (IIV-6).